The sequence spans 321 residues: Lactamase-like protein notP (321 aa).

H108, H110, D112, and H113 together coordinate Zn(2+). The Proton donor/acceptor role is filled by D112.

Belongs to the metallo-beta-lactamase superfamily. Zn(2+) serves as cofactor.

In terms of biological role, lactamase-like protein; part of the gene cluster that mediates the biosynthesis of notoamide, a fungal indole alkaloid that belongs to a family of natural products containing a characteristic bicyclo[2.2.2]diazaoctane core. The first step of notoamide biosynthesis involves coupling of L-proline and L-tryptophan by the bimodular NRPS notE, to produce cyclo-L-tryptophan-L-proline called brevianamide F. The reverse prenyltransferase notF then acts as a deoxybrevianamide E synthase and converts brevianamide F to deoxybrevianamide E via reverse prenylation at C-2 of the indole ring leading to the bicyclo[2.2.2]diazaoctane core. Deoxybrevianamide E is further hydroxylated at C-6 of the indole ring, likely catalyzed by the cytochrome P450 monooxygenase notG, to yield 6-hydroxy-deoxybrevianamide E. 6-hydroxy-deoxybrevianamide E is a specific substrate of the prenyltransferase notC for normal prenylation at C-7 to produce 6-hydroxy-7-prenyl-deoxybrevianamide, also called notoamide S. As the proposed pivotal branching point in notoamide biosynthesis, notoamide S can be diverted to notoamide E through an oxidative pyran ring closure putatively catalyzed by either notH cytochrome P450 monooxygenase or the notD FAD-linked oxidoreductase. This step would be followed by an indole 2,3-epoxidation-initiated pinacol-like rearrangement catalyzed by the notB FAD-dependent monooxygenase leading to the formation of notoamide C and notoamide D. On the other hand notoamide S is converted to notoamide T by notH (or notD), a bifunctional oxidase that also functions as the intramolecular Diels-Alderase responsible for generation of (+)-notoamide T. To generate antipodal (-)-notoaminide T, notH' (or notD') in Aspergillus versicolor is expected to catalyze a Diels-Alder reaction leading to the opposite stereochemistry. The remaining oxidoreductase notD (or notH) likely catalyzes the oxidative pyran ring formation to yield (+)-stephacidin A. The FAD-dependent monooxygenase notI is highly similar to notB and is predicted to catalyze a similar conversion from (+)-stephacidin A to (-)-notoamide B via the 2,3-epoxidation of (+)-stephacidin A followed by a pinacol-type rearrangement. Finally, it remains unclear which enzyme could be responsible for the final hydroxylation steps leading to notoamide A and sclerotiamide. The function of notP in the notoamide biosynthesis has not been determined yet. The polypeptide is Lactamase-like protein notP (Aspergillus sp. (strain MF297-2)).